A 445-amino-acid chain; its full sequence is Tubulin beta-2A chain (445 aa).

An MREI motif motif is present at residues 1 to 4 (MREI). Glutamine 11 is a binding site for GTP. Serine 40 is modified (phosphoserine). N6-acetyllysine; alternate is present on lysine 58. Lysine 58 carries the N6-succinyllysine; alternate modification. Lysine 58 is covalently cross-linked (Glycyl lysine isopeptide (Lys-Gly) (interchain with G-Cter in ubiquitin); alternate). GTP contacts are provided by glutamate 69, serine 138, glycine 142, threonine 143, and glycine 144. A Mg(2+)-binding site is contributed by glutamate 69. Phosphoserine; by CDK1 is present on serine 172. Residues asparagine 204 and asparagine 226 each coordinate GTP. Threonine 285 and threonine 290 each carry phosphothreonine. At arginine 318 the chain carries Omega-N-methylarginine. A Glycyl lysine isopeptide (Lys-Gly) (interchain with G-Cter in ubiquitin) cross-link involves residue lysine 324. Residues 422–445 (YQQYQDATADEQGEFEEEEGEDEA) form a disordered region. A compositionally biased stretch (acidic residues) spans 429-445 (TADEQGEFEEEEGEDEA). Glutamate 438 is modified (5-glutamyl polyglutamate).

This sequence belongs to the tubulin family. In terms of assembly, interacts with ZNRF1. Part of a complex composed at least of ASH2L, EMSY, HCFC1, HSPA8, CCAR2, MATR3, MKI67, RBBP5, TUBB2A, WDR5 and ZNF335; this complex may have a histone H3-specific methyltransferase activity. Dimer of alpha and beta chains. A typical microtubule is a hollow water-filled tube with an outer diameter of 25 nm and an inner diameter of 15 nM. Alpha-beta heterodimers associate head-to-tail to form protofilaments running lengthwise along the microtubule wall with the beta-tubulin subunit facing the microtubule plus end conferring a structural polarity. Microtubules usually have 13 protofilaments but different protofilament numbers can be found in some organisms and specialized cells. The cofactor is Mg(2+). In terms of processing, some glutamate residues at the C-terminus are polyglutamylated, resulting in polyglutamate chains on the gamma-carboxyl group. Polyglutamylation plays a key role in microtubule severing by spastin (SPAST). SPAST preferentially recognizes and acts on microtubules decorated with short polyglutamate tails: severing activity by SPAST increases as the number of glutamates per tubulin rises from one to eight, but decreases beyond this glutamylation threshold. Glutamylation is also involved in cilia motility. Some glutamate residues at the C-terminus are monoglycylated but not polyglycylated due to the absence of functional TTLL10 in human. Monoglycylation is mainly limited to tubulin incorporated into cilia and flagella axonemes, which is required for their stability and maintenance. Flagella glycylation controls sperm motility. Both polyglutamylation and monoglycylation can coexist on the same protein on adjacent residues, and lowering glycylation levels increases polyglutamylation, and reciprocally. Post-translationally, phosphorylated on Ser-172 by CDK1 during the cell cycle, from metaphase to telophase, but not in interphase. This phosphorylation inhibits tubulin incorporation into microtubules. As to expression, high expression in brain, where it represents 30% of all beta-tubulins.

Its subcellular location is the cytoplasm. It localises to the cytoskeleton. Its function is as follows. Tubulin is the major constituent of microtubules, a cylinder consisting of laterally associated linear protofilaments composed of alpha- and beta-tubulin heterodimers. Microtubules grow by the addition of GTP-tubulin dimers to the microtubule end, where a stabilizing cap forms. Below the cap, tubulin dimers are in GDP-bound state, owing to GTPase activity of alpha-tubulin. This is Tubulin beta-2A chain (TUBB2A) from Homo sapiens (Human).